Here is a 610-residue protein sequence, read N- to C-terminus: Granule-bound starch synthase 1, chloroplastic/amyloplastic (610 aa).

The N-terminal 79 residues, 1 to 79 (MATVTASSNF…SKVKTAGKIV (79 aa)), are a transit peptide targeting the chloroplast. Lysine 98 is an ADP-alpha-D-glucose binding site. The stretch at 438–454 (TGKKKMEAQILELEEKF) forms a coiled coil.

It belongs to the glycosyltransferase 1 family. Bacterial/plant glycogen synthase subfamily. As to quaternary structure, interacts with PTST. This interaction is critical for the localization to starch granules. In terms of tissue distribution, expressed in roots, inflorescences, flowers, fruits and at much higher levels in leaves.

Its subcellular location is the plastid. The protein localises to the chloroplast. The enzyme catalyses an NDP-alpha-D-glucose + [(1-&gt;4)-alpha-D-glucosyl](n) = [(1-&gt;4)-alpha-D-glucosyl](n+1) + a ribonucleoside 5'-diphosphate + H(+). Its pathway is glycan biosynthesis; starch biosynthesis. In terms of biological role, required for the synthesis of amylose. Destroyed as it is released from the starch granules during the night. The circadian expression is controlled by CCA1 and LHY transcription factors. In Arabidopsis thaliana (Mouse-ear cress), this protein is Granule-bound starch synthase 1, chloroplastic/amyloplastic.